We begin with the raw amino-acid sequence, 140 residues long: 3-hydroxyacyl-[acyl-carrier-protein] dehydratase FabZ (140 aa).

The active site involves His-48.

It belongs to the thioester dehydratase family. FabZ subfamily.

The protein localises to the cytoplasm. It carries out the reaction a (3R)-hydroxyacyl-[ACP] = a (2E)-enoyl-[ACP] + H2O. Its function is as follows. Involved in unsaturated fatty acids biosynthesis. Catalyzes the dehydration of short chain beta-hydroxyacyl-ACPs and long chain saturated and unsaturated beta-hydroxyacyl-ACPs. The chain is 3-hydroxyacyl-[acyl-carrier-protein] dehydratase FabZ from Pelotomaculum thermopropionicum (strain DSM 13744 / JCM 10971 / SI).